Reading from the N-terminus, the 676-residue chain is Hypermethylated in cancer 1 protein (676 aa).

A disordered region spans residues 1-27 (APGARPAASRERGHKSREERCGERGAA). Over residues 8-23 (ASRERGHKSREERCGE) the composition is skewed to basic and acidic residues. Residues 63–126 (CDVIIVVQNA…IYTGRLGECE (64 aa)) form the BTB domain. The tract at residues 241–245 (GLDLS) is binding to CtBP. 2 disordered regions span residues 264–326 (PAEP…LPRG) and 342–405 (GPYL…DRYC). Composition is skewed to basic and acidic residues over residues 266-278 (EPRE…RHDS) and 351-361 (EKELEREEKAE). Positions 384–398 (STSEETGSSEGPSPG) are enriched in low complexity. 5 C2H2-type zinc fingers span residues 420-447 (YVCI…EEEL), 474-501 (YRCS…LTRP), 502-529 (YPCT…GLKP), 530-557 (FACD…GEKP), and 558-585 (YECQ…AGPD).

It belongs to the krueppel C2H2-type zinc-finger protein family. Hic subfamily. In terms of assembly, interacts with CtBP. Isoform 1 is highly expressed in kidney and lung. Expression of isoform 2 is higher in the lens, retina and stomach, and extremely low in heart, muscle, kidney and lung. Isoform 3 is weakly expressed in heart, kidney and lens.

The protein localises to the nucleus. Functionally, binds specifically to the gamma F-1-binding motif of the gamma F-crystallin promoter. May have a regulatory role in sclerotome specification and/or differentiation. Isoform 2 functions as a transcriptional repressor in lens cells. The protein is Hypermethylated in cancer 1 protein (HIC1) of Gallus gallus (Chicken).